A 344-amino-acid polypeptide reads, in one-letter code: Tetraacyldisaccharide 4'-kinase (344 aa).

Residue 65–72 (HAGGTGKT) participates in ATP binding.

The protein belongs to the LpxK family.

The enzyme catalyses a lipid A disaccharide + ATP = a lipid IVA + ADP + H(+). The protein operates within glycolipid biosynthesis; lipid IV(A) biosynthesis; lipid IV(A) from (3R)-3-hydroxytetradecanoyl-[acyl-carrier-protein] and UDP-N-acetyl-alpha-D-glucosamine: step 6/6. In terms of biological role, transfers the gamma-phosphate of ATP to the 4'-position of a tetraacyldisaccharide 1-phosphate intermediate (termed DS-1-P) to form tetraacyldisaccharide 1,4'-bis-phosphate (lipid IVA). The sequence is that of Tetraacyldisaccharide 4'-kinase from Neisseria meningitidis serogroup B (strain ATCC BAA-335 / MC58).